Reading from the N-terminus, the 241-residue chain is Proteasome subunit alpha (241 aa).

It belongs to the peptidase T1A family. As to quaternary structure, the 20S proteasome core is composed of 14 alpha and 14 beta subunits that assemble into four stacked heptameric rings, resulting in a barrel-shaped structure. The two inner rings, each composed of seven catalytic beta subunits, are sandwiched by two outer rings, each composed of seven alpha subunits. The catalytic chamber with the active sites is on the inside of the barrel. Has a gated structure, the ends of the cylinder being occluded by the N-termini of the alpha-subunits. Is capped at one or both ends by the proteasome regulatory ATPase, PAN.

Its subcellular location is the cytoplasm. With respect to regulation, the formation of the proteasomal ATPase PAN-20S proteasome complex, via the docking of the C-termini of PAN into the intersubunit pockets in the alpha-rings, triggers opening of the gate for substrate entry. Interconversion between the open-gate and close-gate conformations leads to a dynamic regulation of the 20S proteasome proteolysis activity. Functionally, component of the proteasome core, a large protease complex with broad specificity involved in protein degradation. This is Proteasome subunit alpha from Saccharolobus solfataricus (strain ATCC 35092 / DSM 1617 / JCM 11322 / P2) (Sulfolobus solfataricus).